The primary structure comprises 409 residues: Tryptophan synthase beta chain (409 aa).

Lys98 is subject to N6-(pyridoxal phosphate)lysine.

The protein belongs to the TrpB family. In terms of assembly, tetramer of two alpha and two beta chains. It depends on pyridoxal 5'-phosphate as a cofactor.

It carries out the reaction (1S,2R)-1-C-(indol-3-yl)glycerol 3-phosphate + L-serine = D-glyceraldehyde 3-phosphate + L-tryptophan + H2O. The protein operates within amino-acid biosynthesis; L-tryptophan biosynthesis; L-tryptophan from chorismate: step 5/5. Its function is as follows. The beta subunit is responsible for the synthesis of L-tryptophan from indole and L-serine. The protein is Tryptophan synthase beta chain (trpB) of Cereibacter sphaeroides (strain ATCC 17023 / DSM 158 / JCM 6121 / CCUG 31486 / LMG 2827 / NBRC 12203 / NCIMB 8253 / ATH 2.4.1.) (Rhodobacter sphaeroides).